Reading from the N-terminus, the 221-residue chain is Type 3 secretion system stator protein (221 aa).

This sequence belongs to the SctL stator family. As to quaternary structure, the core secretion machinery of the T3SS is composed of approximately 20 different proteins, including cytoplasmic components, a base, an export apparatus and a needle. This subunit is part of the cytosolic complex. Interacts directly with YscN/SctN (T3SS ATPase) and YscQ/SctQ (the major sorting platform component).

Its subcellular location is the cytoplasm. Its function is as follows. Component of the type III secretion system (T3SS), also called injectisome, which is used to inject bacterial effector proteins into eukaryotic host cells. Acts as a regulator of the YscN/SctN ATPase activity. The protein is Type 3 secretion system stator protein of Yersinia pestis.